The chain runs to 196 residues: 7-methyl-GTP pyrophosphatase (196 aa).

The active-site Proton acceptor is the Asp69.

It belongs to the Maf family. YceF subfamily. A divalent metal cation serves as cofactor.

The protein resides in the cytoplasm. It carries out the reaction N(7)-methyl-GTP + H2O = N(7)-methyl-GMP + diphosphate + H(+). Functionally, nucleoside triphosphate pyrophosphatase that hydrolyzes 7-methyl-GTP (m(7)GTP). May have a dual role in cell division arrest and in preventing the incorporation of modified nucleotides into cellular nucleic acids. This chain is 7-methyl-GTP pyrophosphatase, found in Photorhabdus laumondii subsp. laumondii (strain DSM 15139 / CIP 105565 / TT01) (Photorhabdus luminescens subsp. laumondii).